A 251-amino-acid chain; its full sequence is Probable transcriptional regulatory protein MLBr00475 (251 aa).

Belongs to the TACO1 family.

The protein resides in the cytoplasm. The chain is Probable transcriptional regulatory protein MLBr00475 from Mycobacterium leprae (strain Br4923).